Consider the following 515-residue polypeptide: Cytochrome P450 monooxygenase mfmA (515 aa).

Residues 3-23 (KISIIPIVGVALSLAIILQLG) form a helical membrane-spanning segment. Cysteine 453 lines the heme pocket.

This sequence belongs to the cytochrome P450 family. Requires heme as cofactor.

It localises to the membrane. It functions in the pathway secondary metabolite biosynthesis; terpenoid biosynthesis. Functionally, cytochrome P450 monooxygenase; part of the gene cluster that mediates the biosynthesis of the phthalide-terpenoid hybrid 11'-O-desmethylfendlerol. Within the pathway, mfma and mfmC act together to convert 3,5-dimethylorsellinic acid (DMOA) into the phthalide 5,7-dihydroxy-4-(hydroxymethyl)-6-methylphthalide. MfmA performs especially an hydroxylation at C-9. The biosynthesis of 11'-O-desmethylfendlerol begins with the NR-PKS mfmB that forms 3,5-dimethylorsellinic acid (DMOA), which is then transformed into the phthalide 5,7-dihydroxy-4-(hydroxymethyl)-6-methylphthalide by the cytochrome P450 monooxygenase mfmA and the hydrolase mfmC. Subsequently, the methyltransferase mfmE catalyzes 7-O-methylation to yield 5-hydroxy-4-(hydroxymethyl)-7-methoxy-6-methylphthalide, which undergoes C-3 hydroxylation by the cytochrome P450 monooxygenase mfmF. The resultant cyclopolic acid (2,5-dihydroxy-4-(hydroxymethyl)-7-methoxy-6-methylphthalide) is then farnesylated by the DMATS-type prenyltransferase mfmD to afford 5-O-farnesylcyclopolic acid. Finally, the Pyr4-family terpene cyclase mfmH cyclizes the farnesyl moiety of 5-O-farnesylcyclopolic acid into a drimane-like structure, thus completing the biosynthesis of 11'-O-desmethylfendlerol. This is Cytochrome P450 monooxygenase mfmA from Annulohypoxylon moriforme (Filamentous fungus).